Here is a 281-residue protein sequence, read N- to C-terminus: Elongation factor Ts (281 aa).

The interval threonine 80–valine 83 is involved in Mg(2+) ion dislocation from EF-Tu.

Belongs to the EF-Ts family.

The protein localises to the cytoplasm. Associates with the EF-Tu.GDP complex and induces the exchange of GDP to GTP. It remains bound to the aminoacyl-tRNA.EF-Tu.GTP complex up to the GTP hydrolysis stage on the ribosome. The protein is Elongation factor Ts of Vibrio atlanticus (strain LGP32) (Vibrio splendidus (strain Mel32)).